Reading from the N-terminus, the 151-residue chain is Copper transporter 2 (151 aa).

The next 2 membrane-spanning stretches (helical) occupy residues 42 to 62 (GARGGMYALAILFMFALAVLL) and 97 to 117 (VAYLIMLALMSFNGGVFLAIV).

This sequence belongs to the copper transporter (Ctr) (TC 1.A.56) family. SLC31A subfamily. Self-interacts. Interacts with SWEET11 and COPT1.

The protein localises to the cell membrane. Involved in the transport of copper, in cooperation with SWEET11 and COPT1. Contributes to the removal of copper (Cu) from xylem, and thus to the sensitivity toward bacterial pathogens such as X.oryzae pv. oryzae (Xoo). This chain is Copper transporter 2 (COPT2), found in Oryza sativa subsp. japonica (Rice).